The following is a 270-amino-acid chain: Interleukin-33 (270 aa).

Positions methionine 1–threonine 65 are homeodomain-like HTH domain. Residues methionine 1 to phenylalanine 94 constitute a propeptide that is removed on maturation. The interaction with RELA stretch occupies residues threonine 64–serine 111.

The protein belongs to the IL-1 family. Highly divergent. In terms of assembly, forms a 1:1:1 heterotrimeric complex with its primary high-affinity receptor IL1RL1 and the coreceptor IL1RAP. Interacts with cargo receptor TMED10; the interaction mediates the translocation from the cytoplasm into the ERGIC (endoplasmic reticulum-Golgi intermediate compartment) and thereby secretion. (Microbial infection) Interacts (in reduced form) with H.polygyrus ARI. Post-translationally, the full-length protein can be released from cells and is able to signal via the IL1RL1/ST2 receptor. However, proteolytic processing by CELA1, CSTG/cathepsin G and ELANE/neutrophil elastase produces C-terminal peptides that are more active than the unprocessed full length protein. May also be proteolytically processed by calpains. Proteolytic cleavage mediated by apoptotic caspases including CASP3 and CASP7 results in IL33 inactivation. In vitro proteolytic cleavage by CASP1 was reported but could not be confirmed in vivo suggesting that IL33 is probably not a direct substrate for that caspase. As to expression, expressed at high level in high endothelial venules found in tonsils, Peyer patches and mesenteric lymph nodes. Almost undetectable in placenta.

The protein resides in the nucleus. It is found in the chromosome. Its subcellular location is the cytoplasm. The protein localises to the cytoplasmic vesicle. It localises to the secretory vesicle. The protein resides in the secreted. Its function is as follows. Cytokine that binds to and signals through the IL1RL1/ST2 receptor which in turn activates NF-kappa-B and MAPK signaling pathways in target cells. Involved in the maturation of Th2 cells inducing the secretion of T-helper type 2-associated cytokines. Also involved in activation of mast cells, basophils, eosinophils and natural killer cells. Acts as an enhancer of polarization of alternatively activated macrophages. Acts as a chemoattractant for Th2 cells, and may function as an 'alarmin', that amplifies immune responses during tissue injury. Induces rapid UCP2-dependent mitochondrial rewiring that attenuates the generation of reactive oxygen species and preserves the integrity of Krebs cycle required for persistent production of itaconate and subsequent GATA3-dependent differentiation of inflammation-resolving alternatively activated macrophages. In terms of biological role, in quiescent endothelia the uncleaved form is constitutively and abundantly expressed, and acts as a chromatin-associated nuclear factor with transcriptional repressor properties, it may sequester nuclear NF-kappaB/RELA, lowering expression of its targets. This form is rapidely lost upon angiogenic or pro-inflammatory activation. In Homo sapiens (Human), this protein is Interleukin-33.